Here is a 130-residue protein sequence, read N- to C-terminus: uncharacterized protein (130 aa).

A helical transmembrane segment spans residues 15-31 (LYLCPAIIRLSSVCTLA).

It is found in the membrane. This is an uncharacterized protein from Saccharomyces cerevisiae (strain ATCC 204508 / S288c) (Baker's yeast).